The following is a 75-amino-acid chain: Protein Tlp homolog (75 aa).

A disordered region spans residues 53-75 (REALDGMREEIKDEARDKKNGYM).

Belongs to the Tlp family.

This Clostridium botulinum (strain ATCC 19397 / Type A) protein is Protein Tlp homolog.